Here is a 456-residue protein sequence, read N- to C-terminus: Chromosomal replication initiator protein DnaA (456 aa).

Positions 1 to 73 (MEIYLDNLWD…ADVVHDILGY (73 aa)) are domain I, interacts with DnaA modulators. The segment at 73–117 (YPVEIYLTTFLVEDSRKNDSGLIWSEHKSVNILGENLSIPKPLPA) is domain II. The segment at 118-334 (NLNAKYMFSR…GALTRVVTYI (217 aa)) is domain III, AAA+ region. ATP contacts are provided by Gly162, Gly164, Lys165, and Thr166. A domain IV, binds dsDNA region spans residues 335 to 456 (SISGLPMTVE…SDRINFSSRH (122 aa)).

Belongs to the DnaA family. Oligomerizes as a right-handed, spiral filament on DNA at oriC.

The protein resides in the cytoplasm. Its function is as follows. Plays an essential role in the initiation and regulation of chromosomal replication. ATP-DnaA binds to the origin of replication (oriC) to initiate formation of the DNA replication initiation complex once per cell cycle. Binds the DnaA box (a 9 base pair repeat at the origin) and separates the double-stranded (ds)DNA. Forms a right-handed helical filament on oriC DNA; dsDNA binds to the exterior of the filament while single-stranded (ss)DNA is stabiized in the filament's interior. The ATP-DnaA-oriC complex binds and stabilizes one strand of the AT-rich DNA unwinding element (DUE), permitting loading of DNA polymerase. After initiation quickly degrades to an ADP-DnaA complex that is not apt for DNA replication. Binds acidic phospholipids. This Trichodesmium erythraeum (strain IMS101) protein is Chromosomal replication initiator protein DnaA.